We begin with the raw amino-acid sequence, 121 residues long: uncharacterized protein (121 aa).

3 consecutive transmembrane segments (helical) span residues Y26–T46, S57–I77, and S90–V110.

The protein localises to the membrane. This is an uncharacterized protein from Saccharomyces cerevisiae (strain ATCC 204508 / S288c) (Baker's yeast).